The following is a 612-amino-acid chain: Glucoamylase (612 aa).

The N-terminal stretch at 1–19 (MVSFSSCLRALALGSSVLA) is a signal peptide. The propeptide occupies 20-25 (VQPVLR). Residue Asn-39 is glycosylated (N-linked (GlcNAc...) asparagine). Substrate is bound at residue Trp-146. Asp-202 serves as the catalytic Proton acceptor. Catalysis depends on Glu-205, which acts as the Proton donor. Disulfide bonds link Cys-236–Cys-239, Cys-248–Cys-475, and Cys-288–Cys-296. The CBM20 domain maps to 506–612 (CQVPTTVSVT…KSAVQSDVWR (107 aa)).

Belongs to the glycosyl hydrolase 15 family.

The catalysed reaction is Hydrolysis of terminal (1-&gt;4)-linked alpha-D-glucose residues successively from non-reducing ends of the chains with release of beta-D-glucose.. This chain is Glucoamylase (glaA), found in Aspergillus oryzae (strain ATCC 42149 / RIB 40) (Yellow koji mold).